A 106-amino-acid polypeptide reads, in one-letter code: UPF0235 protein OCAR_4310/OCA5_c02140 (106 aa).

It belongs to the UPF0235 family.

The sequence is that of UPF0235 protein OCAR_4310/OCA5_c02140 from Afipia carboxidovorans (strain ATCC 49405 / DSM 1227 / KCTC 32145 / OM5) (Oligotropha carboxidovorans).